Here is a 2698-residue protein sequence, read N- to C-terminus: Zinc finger protein 292 (2698 aa).

A C2H2-type 1 zinc finger spans residues 567–589; sequence YSCPICAKNFNSKDSFVPHVTLH. At serine 654 the chain carries Phosphoserine. 6 consecutive C2H2-type zinc fingers follow at residues 681–705, 722–744, 750–774, 779–803, 807–831, and 1085–1110; these read FNCP…VKGH, VICQ…LQMH, YICI…RKEH, AKCL…EAQH, YTCK…QDGH, and FSCQ…KTAH. A compositionally biased stretch (basic and acidic residues) spans 822 to 834; that stretch reads SEMEKHQDGHSHP. Residues 822-894 form a disordered region; that stretch reads SEMEKHQDGH…AEPAVTKHGQ (73 aa). N6-acetyllysine is present on lysine 1104. Serine 1146 carries the phosphoserine modification. The segment covering 1278-1325 has biased composition (polar residues); sequence NSTNHYPSQTDGNINSSFLKGGSSENGVFPSQVSSADDFSSTSAQPST. Residues 1278–1349 are disordered; that stretch reads NSTNHYPSQT…KERKPKHNKR (72 aa). The segment at 1361 to 1383 adopts a C2H2-type 8; degenerate zinc-finger fold; that stretch reads FICSRCYRAFTNPRSLGGHLSKR. Composition is skewed to polar residues over residues 1574–1603 and 1624–1633; these read FSSS…TRSS and SVSNTSQNVL. Residues 1574–1656 are disordered; the sequence is FSSSTEPPQN…PVPDTNTRSD (83 aa). C2H2-type zinc fingers lie at residues 1879-1904 and 1924-1949; these read FVCQ…GKIH and FKCV…QLVH. The tract at residues 1964-1997 is disordered; the sequence is PYGRKSQSENLSSPQNNQVKKQPSMAEETKTESQ. A compositionally biased stretch (polar residues) spans 1971-1984; it reads SENLSSPQNNQVKK. Lysine 2020 carries the post-translational modification N6-acetyllysine. Over residues 2021 to 2032 the composition is skewed to basic and acidic residues; it reads QLAEKKSPEKPE. The interval 2021–2075 is disordered; sequence QLAEKKSPEKPESSSQPVTSSAEQYNANLANLKTKGRKNKRHRKEKEEKREKNPV. Over residues 2038 to 2051 the composition is skewed to polar residues; sequence VTSSAEQYNANLAN. Over residues 2054–2064 the composition is skewed to basic residues; sequence TKGRKNKRHRK. 4 C2H2-type zinc fingers span residues 2091–2116, 2149–2174, 2193–2218, and 2233–2258; these read YCCV…QAVH, FRCQ…MKLH, FPCD…EVDH, and YKCD…FNKH. Over residues 2262 to 2271 the composition is skewed to basic residues; the sequence is HKAHLIRPRK. The tract at residues 2262 to 2323 is disordered; sequence HKAHLIRPRK…KSNLENKSAK (62 aa). The C2H2-type 15 zinc finger occupies 2362 to 2386; sequence YPCMIKGCTSVVTSESNIIRHYKCH. Disordered stretches follow at residues 2411 to 2454, 2467 to 2553, and 2580 to 2608; these read GKEI…GEKD, LINE…EEHP, and KQKK…HVDK. Residues 2421-2437 show a composition bias toward basic and acidic residues; it reads KNDKKDPDSSVLEKNDN. The span at 2470–2488 shows a compositional bias: polar residues; it reads EDSTNAENQGNTTLKGNNE. Basic and acidic residues-rich tracts occupy residues 2489 to 2501 and 2580 to 2590; these read FQEH…ERQK and KQKKNSDRDHS. Basic residues predominate over residues 2596 to 2606; the sequence is RGSHSSSRRHV.

Belongs to the krueppel C2H2-type zinc-finger protein family. As to expression, expressed in postnatal day 1 (P1) pituitary. Also detected in presomatotrophic cell line GHFT1-5.

It is found in the nucleus. Its function is as follows. May be involved in transcriptional regulation. The polypeptide is Zinc finger protein 292 (Mus musculus (Mouse)).